The following is a 271-amino-acid chain: ELH (271 aa).

The first 28 residues, 1–28 (MKRPNNRPTNTMSLILCLTLSSLCVSSQ), serve as a signal peptide directing secretion. 2 propeptides span residues 29 to 95 (SASV…NEKR) and 162 to 184 (AAGGMEQSEGQNPETESHSRRKR). A disordered region spans residues 162–190 (AAGGMEQSEGQNPETESHSRRKRSVLTPS). At Lys-241 the chain carries Lysine amide.

It belongs to the molluscan ELH family. In terms of tissue distribution, bag cell neurons.

The protein localises to the secreted. Functionally, ELH acts as a neurotransmitter locally, upon neurons of the abdominal ganglion and as a hormone by diffusing into the circulating hemolymph and modulating the activity of other organs. It specifically causes contraction of smooth muscle in the ovotestis and expulsion of the egg string. In terms of biological role, alpha-BCP decreases the activity of a cluster of neurons in the left upper quadrant of the abdominal ganglion. Its function is as follows. Beta-BCP specifically excites 2 neurons, L1 and R1, in the abdominal ganglion. The sequence is that of ELH from Aplysia californica (California sea hare).